The following is a 204-amino-acid chain: Minor allergen Cla h 7 (204 aa).

The region spanning 5-195 is the Flavodoxin-like domain; that stretch reads IAIIFYSTWG…ELTAQGKAFY (191 aa).

The protein belongs to the WrbA family.

It is found in the cytoplasm. In Davidiella tassiana (Mycosphaerella tassiana), this protein is Minor allergen Cla h 7 (CLAH7).